The sequence spans 255 residues: Hydroxyacylglutathione hydrolase (255 aa).

Residues His56, His58, Asp60, His61, His114, Asp133, and His171 each contribute to the Zn(2+) site.

This sequence belongs to the metallo-beta-lactamase superfamily. Glyoxalase II family. As to quaternary structure, monomer. Zn(2+) serves as cofactor.

It catalyses the reaction an S-(2-hydroxyacyl)glutathione + H2O = a 2-hydroxy carboxylate + glutathione + H(+). Its pathway is secondary metabolite metabolism; methylglyoxal degradation; (R)-lactate from methylglyoxal: step 2/2. Functionally, thiolesterase that catalyzes the hydrolysis of S-D-lactoyl-glutathione to form glutathione and D-lactic acid. This chain is Hydroxyacylglutathione hydrolase, found in Rhodopseudomonas palustris (strain BisB5).